The following is a 121-amino-acid chain: uncharacterized protein (121 aa).

Positions 101-121 are disordered; it reads SIEPTATGSPETRDPDPSAYA. The segment covering 111 to 121 has biased composition (basic and acidic residues); it reads ETRDPDPSAYA.

The protein localises to the mitochondrion. This is an uncharacterized protein from Arabidopsis thaliana (Mouse-ear cress).